A 321-amino-acid chain; its full sequence is uncharacterized protein (321 aa).

This is an uncharacterized protein from Aquifex aeolicus (strain VF5).